We begin with the raw amino-acid sequence, 906 residues long: Protein translocase subunit SecA (906 aa).

Residues Gln-89, 107 to 111, and Asp-502 each bind ATP; that span reads GEGKT. Zn(2+) is bound by residues Cys-885, Cys-887, Cys-896, and His-897.

Belongs to the SecA family. In terms of assembly, monomer and homodimer. Part of the essential Sec protein translocation apparatus which comprises SecA, SecYEG and auxiliary proteins SecDF-YajC and YidC. Zn(2+) is required as a cofactor.

It is found in the cell inner membrane. Its subcellular location is the cytoplasm. It catalyses the reaction ATP + H2O + cellular proteinSide 1 = ADP + phosphate + cellular proteinSide 2.. Its function is as follows. Part of the Sec protein translocase complex. Interacts with the SecYEG preprotein conducting channel. Has a central role in coupling the hydrolysis of ATP to the transfer of proteins into and across the cell membrane, serving both as a receptor for the preprotein-SecB complex and as an ATP-driven molecular motor driving the stepwise translocation of polypeptide chains across the membrane. This chain is Protein translocase subunit SecA, found in Rhizobium rhizogenes (strain K84 / ATCC BAA-868) (Agrobacterium radiobacter).